The chain runs to 211 residues: Superoxide dismutase [Cu-Zn], chloroplastic (211 aa).

Residues 1–57 constitute a chloroplast transit peptide; that stretch reads MQAILAAAMAAQTLLFSATAPPASLFQSPSSARPFHSLRLAAGPAGAAAARALVVAD. Residues histidine 103, histidine 105, and histidine 120 each contribute to the Cu cation site. A disulfide bridge links cysteine 114 with cysteine 203. Residues histidine 120, histidine 128, histidine 137, and aspartate 140 each coordinate Zn(2+). Histidine 177 contributes to the Cu cation binding site.

The protein belongs to the Cu-Zn superoxide dismutase family. As to quaternary structure, homotetramer. Cu cation serves as cofactor. Requires Zn(2+) as cofactor.

It is found in the plastid. The protein resides in the chloroplast. The catalysed reaction is 2 superoxide + 2 H(+) = H2O2 + O2. Its function is as follows. Destroys radicals which are normally produced within the cells and which are toxic to biological systems. This chain is Superoxide dismutase [Cu-Zn], chloroplastic (SODCP), found in Oryza sativa subsp. japonica (Rice).